A 206-amino-acid chain; its full sequence is Large ribosomal subunit protein eL13y (206 aa).

The tract at residues 182–206 is disordered; it reads LERTNKRHAGARAKRAADAEKEEKK. The segment covering 186–195 has biased composition (basic residues); sequence NKRHAGARAK. Positions 196–206 are enriched in basic and acidic residues; the sequence is RAADAEKEEKK.

The protein belongs to the eukaryotic ribosomal protein eL13 family.

The sequence is that of Large ribosomal subunit protein eL13y from Brassica napus (Rape).